A 337-amino-acid polypeptide reads, in one-letter code: MGFCIPSRSKMLKRGSRKSSSILARRPTPKKMNIVTDLENRLKKNSYIENTNQGNILMDSIFVSTMPVETLFGSYITDDYELKDLLNVTYNIKPDIVPDIKLDAVLDRDGNFRPADCFLVKLKHRDGFTKGALYLGHSAGFTATICLKNEGVSGLYIPGASVIRSNICQGDTVSRSSRGVQFLPQIGGEAIFLIVSLCPTKKLVETGFVIPEISSNDNAKIAARILSEKRKDTIAHIDTLIQHRQQLELAYYNSCMLTEFLHYCNSYAGTIKESLLKETIQKDINITHTNITTLLNETAKVIKLVKSLVDKEDTDIVNNFITKEIKTVEVLKQRQNS.

The protein belongs to the orthopoxvirus OPG055 family.

Its function is as follows. Stimulates increases in peripheral microtubule dynamics and may increase the motility of the infected cells, contributing to cell-to-cell spread of the virus. Seems to inhibit the signaling via the GTPase RHOA and DIAPH1/mDia. The protein is Protein OPG055 (OPG055) of Homo sapiens (Human).